A 240-amino-acid chain; its full sequence is Aquaporin Z (240 aa).

2 consecutive transmembrane segments (helical) span residues 10-30 and 35-55; these read MIGTFWLTFAGCGSAVIAAGF and IGLVGVSLAFGLSVVTMAYAI. Positions 64-66 match the NPA 1 motif; sequence NPA. The next 3 helical transmembrane spans lie at 90–110, 131–151, and 160–180; these read VLGAIAAAALLYLIASGAAGF, LVACFVMEVVMTMMFLFVIMG, and GFAPLAIGLALVMIHLVSIPV. Residues 186-188 carry the NPA 2 motif; it reads NPA. The chain crosses the membrane as a helical span at residues 202–222; it reads IGQLWLFWVAPLLGGVLGGVI.

Belongs to the MIP/aquaporin (TC 1.A.8) family. As to quaternary structure, homotetramer.

Its subcellular location is the cell inner membrane. It carries out the reaction H2O(in) = H2O(out). Its function is as follows. Channel that permits osmotically driven movement of water in both directions. It is involved in the osmoregulation and in the maintenance of cell turgor during volume expansion in rapidly growing cells. It mediates rapid entry or exit of water in response to abrupt changes in osmolarity. The protein is Aquaporin Z of Rhodopseudomonas palustris (strain ATCC BAA-98 / CGA009).